We begin with the raw amino-acid sequence, 265 residues long: Orotidine 5'-phosphate decarboxylase (265 aa).

Residues D37, 59–61, 91–100, Y217, and R236 contribute to the substrate site; these read KTH and DRKFADIGNT. K93 (proton donor) is an active-site residue.

This sequence belongs to the OMP decarboxylase family.

The catalysed reaction is orotidine 5'-phosphate + H(+) = UMP + CO2. Its pathway is pyrimidine metabolism; UMP biosynthesis via de novo pathway; UMP from orotate: step 2/2. This chain is Orotidine 5'-phosphate decarboxylase (URA3), found in Saccharomycopsis fibuligera (Yeast).